A 279-amino-acid polypeptide reads, in one-letter code: Probable endonuclease 4 (279 aa).

The Zn(2+) site is built by histidine 69, histidine 109, glutamate 145, aspartate 179, histidine 182, histidine 216, aspartate 229, histidine 231, and glutamate 261.

It belongs to the AP endonuclease 2 family. Requires Zn(2+) as cofactor.

It catalyses the reaction Endonucleolytic cleavage to 5'-phosphooligonucleotide end-products.. Functionally, endonuclease IV plays a role in DNA repair. It cleaves phosphodiester bonds at apurinic or apyrimidinic (AP) sites, generating a 3'-hydroxyl group and a 5'-terminal sugar phosphate. In Serratia proteamaculans (strain 568), this protein is Probable endonuclease 4.